The following is a 668-amino-acid chain: Pentatricopeptide repeat-containing protein CRP1, chloroplastic (668 aa).

The N-terminal 64 residues, 1-64, are a transit peptide targeting the chloroplast; that stretch reads MPASLLPPTF…SASLTSPSPP (64 aa). PPR repeat units lie at residues 154–188, 189–226, 227–261, 262–297, 298–332, 333–367, 368–402, 403–437, 438–472, 473–507, 508–542, 543–577, 578–612, and 613–647; these read SPLLLNSLLAASAAASRPAVALRLLSLLREHDFLP, DLASYSHLLASLLNTRDPPDAALLERLLGDLRESRLEP, DAPLFSDLISAFARAALPDAALELLASAQAIGLTP, RSNAVTALISALGTAGRVAEAEALFLEFFLAGEIKP, RTRAYNALLKGYVRIASLKNAEQVLDEMSQCGVAP, DEATYSLLVDAYTRAGRWESARILLKEMEADGVKP, SSYVFSRILAGFRDRGDWQKAFAVLREMQASGVRP, DRHFYNVMIDTFGKYNCLGHAMDAFNKMREEGIEP, DVVTWNTLIDAHCKGGRHDRAAELFEEMRESNCPP, GTTTYNIMINLLGEQEHWEGVEAMLSEMKEQGLVP, NIITYTTLVDVYGRSGRYKEAIDCIEAMKADGLKP, SPTMYHALVNAYAQRGLADHALNVVKAMKADGLEV, SILVLNSLINAFGEDRRVVEAFSVLQFMRENGLRP, and DVITYTTLMKALIRVEQFDKVPVIYEEMITSGCAP.

Belongs to the PPR family. P subfamily. Component of a multisubunit complex.

Its subcellular location is the plastid. The protein localises to the chloroplast stroma. Functionally, required for the translation of the chloroplast petA and petD mRNAs. Required for the processing of the petD mRNA from a polycistronic precursor. Binds with high affinity to the 5'-UTR of the chloroplastic petA transcript. Activates psaC and petA translation by binding their 5'-UTRs. This is Pentatricopeptide repeat-containing protein CRP1, chloroplastic from Zea mays (Maize).